Here is a 317-residue protein sequence, read N- to C-terminus: Acetyl-coenzyme A carboxylase carboxyl transferase subunit alpha (317 aa).

The CoA carboxyltransferase C-terminal domain maps to 40 to 294 (RLQKKSEELT…KQQILADLQD (255 aa)).

Belongs to the AccA family. In terms of assembly, acetyl-CoA carboxylase is a heterohexamer composed of biotin carboxyl carrier protein (AccB), biotin carboxylase (AccC) and two subunits each of ACCase subunit alpha (AccA) and ACCase subunit beta (AccD).

The protein localises to the cytoplasm. It catalyses the reaction N(6)-carboxybiotinyl-L-lysyl-[protein] + acetyl-CoA = N(6)-biotinyl-L-lysyl-[protein] + malonyl-CoA. It functions in the pathway lipid metabolism; malonyl-CoA biosynthesis; malonyl-CoA from acetyl-CoA: step 1/1. In terms of biological role, component of the acetyl coenzyme A carboxylase (ACC) complex. First, biotin carboxylase catalyzes the carboxylation of biotin on its carrier protein (BCCP) and then the CO(2) group is transferred by the carboxyltransferase to acetyl-CoA to form malonyl-CoA. This chain is Acetyl-coenzyme A carboxylase carboxyl transferase subunit alpha, found in Actinobacillus pleuropneumoniae serotype 5b (strain L20).